Here is a 254-residue protein sequence, read N- to C-terminus: MAAVAATAAAKGNGGGGGRAGAGDASGTRKKKGPGPLATAYLVIYNVVMTAGWLVIAVGLVRAYLAKGSYHSLYYSIEKPLKFFQTGALLEILHCAIGIVPSSVVLTSFQVMSRVFLIWAVTHSVKEVQSEDSVLLFVIAWTITEIIRYSFYTFSLLNHLPYLIKWARYTLFIVLYPMGVSGELLTIYAALPFVRQAGLYSISLPNKYNFSFDYYAFLILIMISYIPIFPQLYFHMIHQRRKILSHTEEHKKFE.

Residue A2 is modified to N-acetylalanine. At 2–41 (AAVAATAAAKGNGGGGGRAGAGDASGTRKKKGPGPLATAY) the chain is on the cytoplasmic side. A disordered region spans residues 11 to 33 (KGNGGGGGRAGAGDASGTRKKKG). The span at 12–21 (GNGGGGGRAG) shows a compositional bias: gly residues. The helical transmembrane segment at 42 to 60 (LVIYNVVMTAGWLVIAVGL) threads the bilayer. Residues 61–79 (VRAYLAKGSYHSLYYSIEK) lie on the Lumenal side of the membrane. Residues 80 to 97 (PLKFFQTGALLEILHCAI) form a helical membrane-spanning segment. At 98–107 (GIVPSSVVLT) the chain is on the cytoplasmic side. A helical membrane pass occupies residues 108-125 (SFQVMSRVFLIWAVTHSV). At 126–130 (KEVQS) the chain is on the lumenal side. A helical membrane pass occupies residues 131–146 (EDSVLLFVIAWTITEI). Topologically, residues 147-169 (IRYSFYTFSLLNHLPYLIKWARY) are cytoplasmic. The helical transmembrane segment at 170–187 (TLFIVLYPMGVSGELLTI) threads the bilayer. Active-site residues include Y176 and E183. The Lumenal portion of the chain corresponds to 188–217 (YAALPFVRQAGLYSISLPNKYNFSFDYYAF). Positions 198 to 214 (GLYSISLPNKYNFSFDY) are may be involved in interaction with TECR. N209 carries an N-linked (GlcNAc...) asparagine glycan. A helical membrane pass occupies residues 218–235 (LILIMISYIPIFPQLYFH). The Cytoplasmic portion of the chain corresponds to 236 to 254 (MIHQRRKILSHTEEHKKFE).

It belongs to the very long-chain fatty acids dehydratase HACD family. In terms of assembly, may interact with enzymes of the ELO family (including ELOVL1); with those enzymes that mediate condensation, the first of the four steps of the reaction cycle responsible for fatty acids elongation, may be part of a larger fatty acids elongase complex. Interacts with BCAP31. Interacts (via the third lumenal loop) with TECR. Highly expressed in testis, spleen, prostate, colon and heart, followed by moderate expression in thymus, ovary, small intestine, peripheral blood leukocytes, liver, skeletal muscle and pancreas. Weakly detected in kidney, placenta, brain and lung.

It is found in the endoplasmic reticulum membrane. It catalyses the reaction a very-long-chain (3R)-3-hydroxyacyl-CoA = a very-long-chain (2E)-enoyl-CoA + H2O. The enzyme catalyses (3R)-hydroxyhexadecanoyl-CoA = (2E)-hexadecenoyl-CoA + H2O. It carries out the reaction (3R)-hydroxyoctadecanoyl-CoA = (2E)-octadecenoyl-CoA + H2O. The catalysed reaction is (3R)-hydroxyeicosanoyl-CoA = (2E)-eicosenoyl-CoA + H2O. It catalyses the reaction (3R)-hydroxydocosanoyl-CoA = (2E)-docosenoyl-CoA + H2O. The enzyme catalyses (3R)-hydroxytetracosanoyl-CoA = (2E)-tetracosenoyl-CoA + H2O. It carries out the reaction (3R)-hydroxyhexacosanoyl-CoA = (2E)-hexacosenoyl-CoA + H2O. It functions in the pathway lipid metabolism; fatty acid biosynthesis. In terms of biological role, catalyzes the third of the very long-chain fatty acids (VLCFA) elongation four-step cycle (condensation, reduction, dehydration, and reduction). This endoplasmic reticulum-elongation process is characterized by the addition of two carbons to the lipid chain through each cycle. This enzyme catalyzes the dehydration of the 3-hydroxyacyl-CoA intermediate into trans-2,3-enoyl-CoA, within each cycle of elongation. Therefore, it participates in the production of various VLCFAs involved in multiple biological processes as precursors of membrane lipids and lipid mediators. The protein is Very-long-chain (3R)-3-hydroxyacyl-CoA dehydratase 2 of Homo sapiens (Human).